Here is a 600-residue protein sequence, read N- to C-terminus: Glutamine--fructose-6-phosphate aminotransferase [isomerizing] (600 aa).

Cysteine 2 (nucleophile; for GATase activity) is an active-site residue. The Glutamine amidotransferase type-2 domain occupies 2-217 (CGIVGFIGEQ…DKEIVIVTKE (216 aa)). SIS domains follow at residues 283 to 422 (IRNA…AKGE) and 452 to 590 (LAKQ…VDKP). The active-site For Fru-6P isomerization activity is lysine 595.

In terms of assembly, homodimer.

It localises to the cytoplasm. It carries out the reaction D-fructose 6-phosphate + L-glutamine = D-glucosamine 6-phosphate + L-glutamate. Functionally, catalyzes the first step in hexosamine metabolism, converting fructose-6P into glucosamine-6P using glutamine as a nitrogen source. This is Glutamine--fructose-6-phosphate aminotransferase [isomerizing] from Bacillus cereus (strain ATCC 14579 / DSM 31 / CCUG 7414 / JCM 2152 / NBRC 15305 / NCIMB 9373 / NCTC 2599 / NRRL B-3711).